Here is a 202-residue protein sequence, read N- to C-terminus: Cytochrome c oxidase assembly protein CtaG (202 aa).

Residues 1 to 14 (MSDKAAAPRKQGRN) lie on the Cytoplasmic side of the membrane. The helical; Signal-anchor for type II membrane protein transmembrane segment at 15 to 37 (NGAVVMMCLSFVFGMGAMSYAAV) threads the bilayer. The Periplasmic segment spans residues 38 to 202 (PLYRIFCQVT…GGTVKIEKKL (165 aa)).

The protein belongs to the COX11/CtaG family.

The protein localises to the cell inner membrane. Exerts its effect at some terminal stage of cytochrome c oxidase synthesis, probably by being involved in the insertion of the copper B into subunit I. This Rhizobium etli (strain ATCC 51251 / DSM 11541 / JCM 21823 / NBRC 15573 / CFN 42) protein is Cytochrome c oxidase assembly protein CtaG.